The primary structure comprises 105 residues: MRIKKGDLVEVISGKDKGKRGKVLRVIPKENKVIVENVNMVKRHQRPIPQLREGGIIEREAPIYASKVMVVCPACDKRTRVGYRFTEDGKKVRYCKKCGEIIDKD.

It belongs to the universal ribosomal protein uL24 family. In terms of assembly, part of the 50S ribosomal subunit.

One of two assembly initiator proteins, it binds directly to the 5'-end of the 23S rRNA, where it nucleates assembly of the 50S subunit. Functionally, one of the proteins that surrounds the polypeptide exit tunnel on the outside of the subunit. The chain is Large ribosomal subunit protein uL24 from Thermotoga petrophila (strain ATCC BAA-488 / DSM 13995 / JCM 10881 / RKU-1).